We begin with the raw amino-acid sequence, 98 residues long: uncharacterized protein (98 aa).

A disordered region spans residues serine 77–histidine 98.

To M.tuberculosis Rv1991c and Rv3269.

This is an uncharacterized protein from Mycobacterium bovis (strain ATCC BAA-935 / AF2122/97).